Here is a 177-residue protein sequence, read N- to C-terminus: Peptidoglycan-associated lipoprotein (177 aa).

The signal sequence occupies residues 1-32 (MSRTNISALSPMQKLARNPAVIAMTLALALAG). The N-palmitoyl cysteine moiety is linked to residue Cys-33. Cys-33 carries the S-diacylglycerol cysteine lipid modification. The 118-residue stretch at 59 to 176 (QQDFTVNVGD…RAVTVLGGAG (118 aa)) folds into the OmpA-like domain.

It belongs to the Pal lipoprotein family. The Tol-Pal system is composed of five core proteins: the inner membrane proteins TolA, TolQ and TolR, the periplasmic protein TolB and the outer membrane protein Pal. They form a network linking the inner and outer membranes and the peptidoglycan layer.

Its subcellular location is the cell outer membrane. Part of the Tol-Pal system, which plays a role in outer membrane invagination during cell division and is important for maintaining outer membrane integrity. This Agrobacterium fabrum (strain C58 / ATCC 33970) (Agrobacterium tumefaciens (strain C58)) protein is Peptidoglycan-associated lipoprotein.